The sequence spans 362 residues: Dihydroorotate dehydrogenase (quinone) (362 aa).

Residues 62 to 66 (AGYDK) and T86 each bind FMN. K66 contributes to the substrate binding site. 111–115 (NRLGF) lines the substrate pocket. FMN-binding residues include N139 and N170. N170 provides a ligand contact to substrate. Catalysis depends on S173, which acts as the Nucleophile. N175 contributes to the substrate binding site. Residues K215 and S243 each contribute to the FMN site. Substrate is bound at residue 244–245 (NT). FMN-binding positions include G266, G295, and 316-317 (YS).

Belongs to the dihydroorotate dehydrogenase family. Type 2 subfamily. As to quaternary structure, monomer. Requires FMN as cofactor.

Its subcellular location is the cell membrane. The enzyme catalyses (S)-dihydroorotate + a quinone = orotate + a quinol. It functions in the pathway pyrimidine metabolism; UMP biosynthesis via de novo pathway; orotate from (S)-dihydroorotate (quinone route): step 1/1. Its function is as follows. Catalyzes the conversion of dihydroorotate to orotate with quinone as electron acceptor. The protein is Dihydroorotate dehydrogenase (quinone) of Sinorhizobium medicae (strain WSM419) (Ensifer medicae).